Reading from the N-terminus, the 400-residue chain is Tryptophan synthase beta chain (400 aa).

N6-(pyridoxal phosphate)lysine is present on K90.

Belongs to the TrpB family. In terms of assembly, tetramer of two alpha and two beta chains. Pyridoxal 5'-phosphate serves as cofactor.

The enzyme catalyses (1S,2R)-1-C-(indol-3-yl)glycerol 3-phosphate + L-serine = D-glyceraldehyde 3-phosphate + L-tryptophan + H2O. It functions in the pathway amino-acid biosynthesis; L-tryptophan biosynthesis; L-tryptophan from chorismate: step 5/5. Its function is as follows. The beta subunit is responsible for the synthesis of L-tryptophan from indole and L-serine. This chain is Tryptophan synthase beta chain, found in Alkaliphilus metalliredigens (strain QYMF).